We begin with the raw amino-acid sequence, 260 residues long: NAD-dependent protein deacetylase (260 aa).

The Deacetylase sirtuin-type domain maps to 9-260; it reads DDIDGETLDA…QVLPAIVERL (252 aa). NAD(+) contacts are provided by Ala-35, Thr-39, Phe-46, Arg-47, Gln-114, Ile-116, Asp-117, and His-132. Phe-46 is a nicotinamide binding site. Nicotinamide contacts are provided by Ile-116 and Asp-117. Catalysis depends on His-132, which acts as the Proton acceptor. Residues Cys-140, Cys-143, Cys-166, and Cys-168 each contribute to the Zn(2+) site. NAD(+)-binding residues include Ser-206, Ser-207, Asn-231, Asp-248, and Val-249.

This sequence belongs to the sirtuin family. Class U subfamily. The cofactor is Zn(2+).

Its subcellular location is the cytoplasm. It catalyses the reaction N(6)-acetyl-L-lysyl-[protein] + NAD(+) + H2O = 2''-O-acetyl-ADP-D-ribose + nicotinamide + L-lysyl-[protein]. Functionally, NAD-dependent protein deacetylase which modulates the activities of several enzymes which are inactive in their acetylated form. Deacetylates the N-terminal lysine residue of Alba, the major archaeal chromatin protein and that, in turn, increases Alba's DNA binding affinity, thereby repressing transcription. In Haloarcula marismortui (strain ATCC 43049 / DSM 3752 / JCM 8966 / VKM B-1809) (Halobacterium marismortui), this protein is NAD-dependent protein deacetylase.